The primary structure comprises 206 residues: 3-demethoxyubiquinol 3-hydroxylase (206 aa).

Residues glutamate 55, glutamate 85, histidine 88, glutamate 137, glutamate 169, and histidine 172 each contribute to the Fe cation site.

Belongs to the COQ7 family. It depends on Fe cation as a cofactor.

The protein localises to the cell membrane. It catalyses the reaction a 5-methoxy-2-methyl-3-(all-trans-polyprenyl)benzene-1,4-diol + AH2 + O2 = a 3-demethylubiquinol + A + H2O. Its pathway is cofactor biosynthesis; ubiquinone biosynthesis. Functionally, catalyzes the hydroxylation of 2-nonaprenyl-3-methyl-6-methoxy-1,4-benzoquinol during ubiquinone biosynthesis. The protein is 3-demethoxyubiquinol 3-hydroxylase of Chromobacterium violaceum (strain ATCC 12472 / DSM 30191 / JCM 1249 / CCUG 213 / NBRC 12614 / NCIMB 9131 / NCTC 9757 / MK).